Here is a 626-residue protein sequence, read N- to C-terminus: ATP-dependent RNA helicase dbp-8 (626 aa).

Residues 1–25 show a composition bias toward low complexity; sequence MPSATAAKAKKANANANLKSKVNKA. Residues 1 to 183 form a disordered region; the sequence is MPSATAAKAK…ATPALPVPEP (183 aa). A compositionally biased stretch (acidic residues) spans 40 to 98; the sequence is DESDFGSELDVEDESAASDEEDEDEDEDEHDLEEGVSDEGEGVSDEEEGVSDEDEDEEN. Residues 161-173 show a composition bias toward basic and acidic residues; it reads KQAEAPKTEKTEE. The Q motif signature appears at 195-223; sequence TTFDALNVRPWLVQSLANMAIKRPTGIQK. Residues 226–406 form the Helicase ATP-binding domain; the sequence is IPEILKGRDC…ERPPIPGRAP (181 aa). 239–246 serves as a coordination point for ATP; it reads SRTGSGKT. Residues 348-351 carry the DEAD box motif; the sequence is DEAD. Positions 438–589 constitute a Helicase C-terminal domain; that stretch reads YLHMFLLTPQ…GVNLETRVIR (152 aa).

This sequence belongs to the DEAD box helicase family. DDX49/DBP8 subfamily.

Its subcellular location is the nucleus. The protein resides in the nucleolus. The enzyme catalyses ATP + H2O = ADP + phosphate + H(+). Its function is as follows. ATP-binding RNA helicase involved in 40S ribosomal subunit biogenesis and is required for the normal formation of 18S rRNAs through pre-rRNA processing at A0, A1 and A2 sites. Required for vegetative growth. The polypeptide is ATP-dependent RNA helicase dbp-8 (dbp-8) (Neurospora crassa (strain ATCC 24698 / 74-OR23-1A / CBS 708.71 / DSM 1257 / FGSC 987)).